Here is a 156-residue protein sequence, read N- to C-terminus: Gamma-L-glutamyl-butirosin B gamma-glutamyl cyclotransferase (156 aa).

Position 24–27 (24–27) interacts with substrate; the sequence is YGTL. Glu89 acts as the Proton acceptor in catalysis.

The protein belongs to the gamma-glutamylcyclotransferase family.

The enzyme catalyses gamma-L-glutamyl-butirosin B = butirosin B + 5-oxo-L-proline. It participates in antibiotic biosynthesis; butirosin biosynthesis. Cyclotransferase that catalyzes the last step in the biosynthesis of the aminoglycoside antibiotic butirosin B. Cleaves the amide bond via transamidation using the alpha-amine of the terminal gamma-L-glutamate of the side chain, releasing it as the cyclic 5-oxoproline. The protein is Gamma-L-glutamyl-butirosin B gamma-glutamyl cyclotransferase (btrG) of Niallia circulans (Bacillus circulans).